The sequence spans 401 residues: Argininosuccinate synthase (401 aa).

An ATP-binding site is contributed by 9–17 (AYSGGLDTS). Tyr87 contacts L-citrulline. Position 117 (Gly117) interacts with ATP. L-aspartate contacts are provided by Thr119, Asn123, and Asp124. Asn123 is an L-citrulline binding site. 5 residues coordinate L-citrulline: Arg127, Ser176, Ser185, Glu261, and Tyr273.

Belongs to the argininosuccinate synthase family. Type 1 subfamily. Homotetramer.

It is found in the cytoplasm. The enzyme catalyses L-citrulline + L-aspartate + ATP = 2-(N(omega)-L-arginino)succinate + AMP + diphosphate + H(+). Its pathway is amino-acid biosynthesis; L-arginine biosynthesis; L-arginine from L-ornithine and carbamoyl phosphate: step 2/3. The protein is Argininosuccinate synthase of Prosthecochloris aestuarii (strain DSM 271 / SK 413).